The primary structure comprises 301 residues: 4-diphosphocytidyl-2-C-methyl-D-erythritol kinase (301 aa).

Lys18 is an active-site residue. Residue 109-119 (PIASGIGGGSA) coordinates ATP. Asp151 is an active-site residue.

This sequence belongs to the GHMP kinase family. IspE subfamily.

The catalysed reaction is 4-CDP-2-C-methyl-D-erythritol + ATP = 4-CDP-2-C-methyl-D-erythritol 2-phosphate + ADP + H(+). It participates in isoprenoid biosynthesis; isopentenyl diphosphate biosynthesis via DXP pathway; isopentenyl diphosphate from 1-deoxy-D-xylulose 5-phosphate: step 3/6. In terms of biological role, catalyzes the phosphorylation of the position 2 hydroxy group of 4-diphosphocytidyl-2C-methyl-D-erythritol. This Rhizobium meliloti (strain 1021) (Ensifer meliloti) protein is 4-diphosphocytidyl-2-C-methyl-D-erythritol kinase.